The primary structure comprises 350 residues: Methylthioribose-1-phosphate isomerase (350 aa).

Residues 48-50, R93, and Q198 contribute to the substrate site; that span reads RGA. Catalysis depends on D239, which acts as the Proton donor. 249–250 lines the substrate pocket; sequence NK.

This sequence belongs to the eIF-2B alpha/beta/delta subunits family. MtnA subfamily.

It carries out the reaction 5-(methylsulfanyl)-alpha-D-ribose 1-phosphate = 5-(methylsulfanyl)-D-ribulose 1-phosphate. The protein operates within amino-acid biosynthesis; L-methionine biosynthesis via salvage pathway; L-methionine from S-methyl-5-thio-alpha-D-ribose 1-phosphate: step 1/6. Its function is as follows. Catalyzes the interconversion of methylthioribose-1-phosphate (MTR-1-P) into methylthioribulose-1-phosphate (MTRu-1-P). In Fervidobacterium nodosum (strain ATCC 35602 / DSM 5306 / Rt17-B1), this protein is Methylthioribose-1-phosphate isomerase.